Reading from the N-terminus, the 164-residue chain is E3 ubiquitin ligase complex SCF subunit sconC (164 aa).

Residues 106 to 164 (ILAANYLDIKALLDVGCKTVANMIKGKSPEEIRKTFNIQNDFTPEEEDQIRRENEWAEE) form an interaction with the F-box domain of F-box proteins region.

Belongs to the SKP1 family. As to quaternary structure, component of the SCF (SKP1-CUL1-F-box protein) E3 ubiquitin ligase complexes.

The protein operates within protein modification; protein ubiquitination. Functionally, essential component of the SCF (SKP1-CUL1-F-box protein) E3 ubiquitin ligase complexes, which mediate the ubiquitination and subsequent proteasomal degradation of target proteins. Controls sulfur metabolite repression, probably by mediating the inactivation or degradation of the metR transcription factor. The polypeptide is E3 ubiquitin ligase complex SCF subunit sconC (sconC) (Arthroderma benhamiae (strain ATCC MYA-4681 / CBS 112371) (Trichophyton mentagrophytes)).